The primary structure comprises 344 residues: 2-methyl-6-phytyl-1,4-hydroquinone methyltransferase, chloroplastic (344 aa).

Residues 1–62 (MACSMLNGVD…LTTVTKCTLS (62 aa)) constitute a chloroplast transit peptide. Topologically, residues 63–313 (ASERPASQPR…PVHPLVFLYR (251 aa)) are chloroplast intermembrane. Positions 121 to 130 (VVDVGGGTGF) are SAM motif I. The interval 166 to 179 (CRIIEGDAEDLPFP) is SAM motif II. The SAM motif III stretch occupies residues 207–220 (RVLKLGGKACLIGP). The chain crosses the membrane as a helical span at residues 314–334 (FLLGALASTYYVLVPIYMWIK). Topologically, residues 335 to 344 (DKIFPKGMPL) are stromal.

Belongs to the class I-like SAM-binding methyltransferase superfamily. MPBQ/MBSQ MT family.

The protein localises to the plastid. It localises to the chloroplast inner membrane. The catalysed reaction is 2-methyl-6-phytyl-1,4-benzene-1,4-diol + S-adenosyl-L-methionine = 2,3-dimethyl-6-phytylbenzene-1,4-diol + S-adenosyl-L-homocysteine + H(+). The enzyme catalyses 2-methyl-6-(all-trans-nonaprenyl)benzene-1,4-diol + S-adenosyl-L-methionine = plastoquinol-9 + S-adenosyl-L-homocysteine + H(+). It carries out the reaction 6-geranylgeranyl-2-methylbenzene-1,4-diol + S-adenosyl-L-methionine = 6-geranylgeranyl-2,3-dimethylbenzene-1,4-diol + S-adenosyl-L-homocysteine + H(+). Its pathway is cofactor biosynthesis; tocopherol biosynthesis. Involved in a key methylation step in both tocopherols (vitamin E) and plastoquinone synthesis. Catalyzes the conversion of 2-methyl-6-phytyl-1,4-hydroquinone (MPBQ) to 2,3-dimethyl-6-phytyl-1,4-hydroquinone (DMPQ, a substrate for tocopherol cyclase), and 2-methyl-6-solanyl-1,4-benzoquinone (MSBQ) to plastoquinone. This chain is 2-methyl-6-phytyl-1,4-hydroquinone methyltransferase, chloroplastic, found in Spinacia oleracea (Spinach).